A 425-amino-acid polypeptide reads, in one-letter code: Kynurenine/alpha-aminoadipate aminotransferase, mitochondrial (425 aa).

The transit peptide at 1–29 directs the protein to the mitochondrion; the sequence is MNYSRFLTATSLARKPSPIRTTADILSKA. Residue R20 coordinates substrate. A Phosphoserine modification is found at S40. K69 carries the post-translational modification N6-acetyllysine. Y74 serves as a coordination point for substrate. An N6-succinyllysine modification is found at K172. K179 is modified (N6-acetyllysine). Residue N202 participates in substrate binding. K263 carries the N6-(pyridoxal phosphate)lysine; alternate modification. N6-acetyllysine; alternate occurs at positions 263 and 339. N6-succinyllysine; alternate is present on residues K263 and K339. K351 carries the post-translational modification N6-acetyllysine. Position 367 is an N6-acetyllysine; alternate (K367). K367 is modified (N6-succinyllysine; alternate). R399 provides a ligand contact to substrate. N6-acetyllysine is present on K422.

The protein belongs to the class-I pyridoxal-phosphate-dependent aminotransferase family. As to quaternary structure, homodimer. Pyridoxal 5'-phosphate is required as a cofactor. In terms of tissue distribution, expressed mainly in kidney and to a lesser amount in liver and brain.

Its subcellular location is the mitochondrion. The enzyme catalyses L-kynurenine + 2-oxoglutarate = kynurenate + L-glutamate + H2O. The catalysed reaction is L-2-aminoadipate + 2-oxoglutarate = 2-oxoadipate + L-glutamate. It catalyses the reaction glycine + 2-oxoglutarate = glyoxylate + L-glutamate. It carries out the reaction L-kynurenine + glyoxylate = kynurenate + glycine + H2O. The enzyme catalyses 3-hydroxy-L-kynurenine + glyoxylate = xanthurenate + glycine + H2O. The catalysed reaction is 2-oxohexanoate + L-kynurenine = L-2-aminohexanoate + kynurenate + H2O. It catalyses the reaction 3-phenylpyruvate + L-kynurenine = kynurenate + L-phenylalanine + H2O. It carries out the reaction 4-methylsulfanyl-2-oxobutanoate + L-kynurenine = kynurenate + L-methionine + H2O. The enzyme catalyses 2-oxo-3-sulfanylpropanoate + L-kynurenine = kynurenate + L-cysteine + H2O. The catalysed reaction is indole-3-pyruvate + L-kynurenine = kynurenate + L-tryptophan + H2O. It catalyses the reaction 2-oxopentanoate + L-kynurenine = L-2-aminopentanoate + kynurenate + H2O. It carries out the reaction 4-methyl-2-oxopentanoate + L-kynurenine = kynurenate + L-leucine + H2O. The enzyme catalyses glyoxylate + L-methionine = 4-methylsulfanyl-2-oxobutanoate + glycine. The catalysed reaction is L-2-aminoadipate + glyoxylate = 2-oxoadipate + glycine. It catalyses the reaction L-tyrosine + glyoxylate = 3-(4-hydroxyphenyl)pyruvate + glycine. It carries out the reaction glyoxylate + L-phenylalanine = 3-phenylpyruvate + glycine. The enzyme catalyses L-tryptophan + glyoxylate = indole-3-pyruvate + glycine. The catalysed reaction is L-leucine + glyoxylate = 4-methyl-2-oxopentanoate + glycine. It catalyses the reaction 2-oxobutanoate + L-kynurenine = (2S)-2-aminobutanoate + kynurenate + H2O. It carries out the reaction 2-oxoadipate + L-kynurenine = L-2-aminoadipate + kynurenate + H2O. It functions in the pathway amino-acid degradation; L-lysine degradation via saccharopine pathway; glutaryl-CoA from L-lysine: step 4/6. Its function is as follows. Transaminase with broad substrate specificity. Has transaminase activity towards aminoadipate, kynurenine, methionine and glutamate. Shows activity also towards tryptophan, aspartate and hydroxykynurenine. Accepts a variety of oxo-acids as amino-group acceptors, with a preference for 2-oxoglutarate, 2-oxocaproic acid, phenylpyruvate and alpha-oxo-gamma-methiol butyric acid. Can also use glyoxylate as amino-group acceptor (in vitro). This is Kynurenine/alpha-aminoadipate aminotransferase, mitochondrial from Mus musculus (Mouse).